An 859-amino-acid chain; its full sequence is DNA mismatch repair protein MutS (859 aa).

614 to 621 (GPNMGGKS) is an ATP binding site.

This sequence belongs to the DNA mismatch repair MutS family.

Functionally, this protein is involved in the repair of mismatches in DNA. It is possible that it carries out the mismatch recognition step. This protein has a weak ATPase activity. The sequence is that of DNA mismatch repair protein MutS from Histophilus somni (strain 2336) (Haemophilus somnus).